The chain runs to 162 residues: Large ribosomal subunit protein uL10 (162 aa).

Belongs to the universal ribosomal protein uL10 family. In terms of assembly, part of the ribosomal stalk of the 50S ribosomal subunit. The N-terminus interacts with L11 and the large rRNA to form the base of the stalk. The C-terminus forms an elongated spine to which L12 dimers bind in a sequential fashion forming a multimeric L10(L12)X complex.

Functionally, forms part of the ribosomal stalk, playing a central role in the interaction of the ribosome with GTP-bound translation factors. The polypeptide is Large ribosomal subunit protein uL10 (Phytoplasma mali (strain AT)).